The following is a 323-amino-acid chain: Zinc finger C2HC domain-containing protein 1A (323 aa).

A C2HC/C3H-type 1 zinc finger spans residues 7-36 (ELRPCKICGRTFFPATLKKHVPICQKTSVK). 4 residues coordinate Zn(2+): Cys-11, Cys-14, His-26, and Cys-30. The segment at 35 to 75 (VKKRKTFESSRQRAEGTDINTVKPVKPRPEPPKKQSNWKRK) is disordered. Basic and acidic residues predominate over residues 40 to 50 (TFESSRQRAEG). The C2HC/C3H-type 2 zinc-finger motif lies at 110 to 139 (DYVQCPYCQRRFNQNAADRHINFCKEQSAR). Cys-114, Cys-117, His-129, and Cys-133 together coordinate Zn(2+). Residues 138–273 (ARMGQKIKGG…EAAMGYDSSD (136 aa)) form a disordered region. Over residues 208-226 (KYQTQSPAHKNSTMVTSPQ) the composition is skewed to polar residues.

The protein belongs to the ZC2HC1 family. It depends on Zn(2+) as a cofactor.

The polypeptide is Zinc finger C2HC domain-containing protein 1A (zc2hc1a) (Xenopus laevis (African clawed frog)).